Here is an 828-residue protein sequence, read N- to C-terminus: DNA gyrase subunit A (828 aa).

The Topo IIA-type catalytic domain occupies 32-497 (LPDVRDGLKP…EVLSLEDEDL (466 aa)). The O-(5'-phospho-DNA)-tyrosine intermediate role is filled by Y120. Residues 524-530 (QKRGGRG) carry the GyrA-box motif.

Belongs to the type II topoisomerase GyrA/ParC subunit family. Heterotetramer, composed of two GyrA and two GyrB chains. In the heterotetramer, GyrA contains the active site tyrosine that forms a transient covalent intermediate with DNA, while GyrB binds cofactors and catalyzes ATP hydrolysis.

The protein resides in the cytoplasm. The enzyme catalyses ATP-dependent breakage, passage and rejoining of double-stranded DNA.. Its function is as follows. A type II topoisomerase that negatively supercoils closed circular double-stranded (ds) DNA in an ATP-dependent manner to modulate DNA topology and maintain chromosomes in an underwound state. Negative supercoiling favors strand separation, and DNA replication, transcription, recombination and repair, all of which involve strand separation. Also able to catalyze the interconversion of other topological isomers of dsDNA rings, including catenanes and knotted rings. Type II topoisomerases break and join 2 DNA strands simultaneously in an ATP-dependent manner. In Streptococcus pyogenes serotype M1, this protein is DNA gyrase subunit A.